A 129-amino-acid polypeptide reads, in one-letter code: Small ribosomal subunit protein uS12 (129 aa).

A disordered region spans residues 1-25 (MPTYNQLVRFGRKSKTRKTKSPALE). A compositionally biased stretch (basic residues) spans 10–20 (FGRKSKTRKTK). The residue at position 89 (aspartate 89) is a 3-methylthioaspartic acid. The tract at residues 110–129 (RKQGRSRYGAPSKQVAVTKK) is disordered.

It belongs to the universal ribosomal protein uS12 family. As to quaternary structure, part of the 30S ribosomal subunit. Contacts proteins S8 and S17. May interact with IF1 in the 30S initiation complex.

In terms of biological role, with S4 and S5 plays an important role in translational accuracy. Its function is as follows. Interacts with and stabilizes bases of the 16S rRNA that are involved in tRNA selection in the A site and with the mRNA backbone. Located at the interface of the 30S and 50S subunits, it traverses the body of the 30S subunit contacting proteins on the other side and probably holding the rRNA structure together. The combined cluster of proteins S8, S12 and S17 appears to hold together the shoulder and platform of the 30S subunit. This Rickettsia canadensis (strain McKiel) protein is Small ribosomal subunit protein uS12.